A 178-amino-acid chain; its full sequence is Large ribosomal subunit protein uL6 (178 aa).

Belongs to the universal ribosomal protein uL6 family. In terms of assembly, part of the 50S ribosomal subunit.

In terms of biological role, this protein binds to the 23S rRNA, and is important in its secondary structure. It is located near the subunit interface in the base of the L7/L12 stalk, and near the tRNA binding site of the peptidyltransferase center. The sequence is that of Large ribosomal subunit protein uL6 from Streptococcus pneumoniae serotype 19F (strain G54).